Here is a 145-residue protein sequence, read N- to C-terminus: uncharacterized protein (145 aa).

One can recognise an ACT domain in the interval 78 to 145 (KLQIVAKDRI…DVVEKISILW (68 aa)).

This is an uncharacterized protein from Methanocaldococcus jannaschii (strain ATCC 43067 / DSM 2661 / JAL-1 / JCM 10045 / NBRC 100440) (Methanococcus jannaschii).